The following is a 202-amino-acid chain: Recoverin (202 aa).

A lipid anchor (N-myristoyl glycine) is attached at G2. EF-hand domains lie at 24–59, 61–96, 97–132, and 147–182; these read TEEELSSWYQSFLKECPSGRITRQEFQTIYSKFFPE, DPKAYAQHVFRSFDANSDGTLDFKEYVIALHMTSAG, KTNQKLEWAFSLYDVDGNGTISKNEVLEIVTAIFKM, and TPEKRAEKIWGFFGKKDDDKLTEKEFIEGTLANKEI. Position 39 is a cysteine sulfenic acid (-SOH) (C39). Ca(2+) is bound by residues D74, N76, D78, T80, E85, D110, D112, N114, T116, and E121. The tract at residues 189 to 192 is interaction with GRK1; sequence EPQK. Positions 191 to 202 are modulates EF-hand 3 domain calcium binding affinity; that stretch reads QKVKEKLKEKKL.

Belongs to the recoverin family. In terms of assembly, homodimer; disulfide-linked. Homodimerization is caused by prolonged intense illumination. May form a complex composed of RHO, GRK1 and RCVRN in a Ca(2+)-dependent manner; RCVRN prevents the interaction between GRK1 and RHO. Interacts (via C-terminus) with GRK1 (via N-terminus); the interaction is Ca(2+)-dependent. In terms of processing, the N-terminal glycine is linked to one of four different types of acyl groups. The most abundant is myristoleate (14:1), but 14:0, 14:2, and 12:0 acyl residues are also present. The Ca(2+) induced exposure of the myristoyl group, known as the calcium-myristoyl switch, promotes RCVRN binding to the photoreceptor cell membranes only when intracellular Ca(2+) concentration is high. Post-translationally, oxidation on Cys-39 occurs in response to prolonged intense illumination and results in the formation of disulfide homodimers, and to a lesser extent disulfide-linked heterodimers. Expressed in the retina (at protein level). Expressed in the pineal gland (at protein level).

It localises to the photoreceptor inner segment. It is found in the cell projection. The protein localises to the cilium. Its subcellular location is the photoreceptor outer segment. The protein resides in the photoreceptor outer segment membrane. It localises to the perikaryon. Acts as a calcium sensor and regulates phototransduction of cone and rod photoreceptor cells. Modulates light sensitivity of cone photoreceptor in dark and dim conditions. In response to high Ca(2+) levels induced by low light levels, prolongs RHO/rhodopsin activation in rod photoreceptor cells by binding to and inhibiting GRK1-mediated phosphorylation of RHO/rhodopsin. Plays a role in scotopic vision/enhances vision in dim light by enhancing signal transfer between rod photoreceptors and rod bipolar cells. Improves rod photoreceptor sensitivity in dim light and mediates response of rod photoreceptors to facilitate detection of change and motion in bright light. This is Recoverin (RCVRN) from Bos taurus (Bovine).